Here is a 177-residue protein sequence, read N- to C-terminus: Cell division inhibitor SulA (177 aa).

The segment at 112–118 is ftsZ binding; the sequence is ALASGNY. The segment at 170–177 is lon protease binding; it reads KIHSIHYH.

Belongs to the SulA family. Interacts with FtsZ. Is rapidly cleaved and degraded by the Lon protease once DNA damage is repaired.

In terms of biological role, component of the SOS system and an inhibitor of cell division. Accumulation of SulA causes rapid cessation of cell division and the appearance of long, non-septate filaments. In the presence of GTP, binds a polymerization-competent form of FtsZ in a 1:1 ratio, thus inhibiting FtsZ polymerization and therefore preventing it from participating in the assembly of the Z ring. This mechanism prevents the premature segregation of damaged DNA to daughter cells during cell division. In Photorhabdus laumondii subsp. laumondii (strain DSM 15139 / CIP 105565 / TT01) (Photorhabdus luminescens subsp. laumondii), this protein is Cell division inhibitor SulA.